Here is a 279-residue protein sequence, read N- to C-terminus: Tryptophan synthase alpha chain (279 aa).

Active-site proton acceptor residues include glutamate 50 and aspartate 61.

This sequence belongs to the TrpA family. As to quaternary structure, tetramer of two alpha and two beta chains.

It carries out the reaction (1S,2R)-1-C-(indol-3-yl)glycerol 3-phosphate + L-serine = D-glyceraldehyde 3-phosphate + L-tryptophan + H2O. Its pathway is amino-acid biosynthesis; L-tryptophan biosynthesis; L-tryptophan from chorismate: step 5/5. Functionally, the alpha subunit is responsible for the aldol cleavage of indoleglycerol phosphate to indole and glyceraldehyde 3-phosphate. This chain is Tryptophan synthase alpha chain, found in Brucella suis biovar 1 (strain 1330).